A 544-amino-acid polypeptide reads, in one-letter code: Probable protein kinase UbiB (544 aa).

In terms of domain architecture, Protein kinase spans Asp-123–Leu-501. ATP contacts are provided by residues Leu-129–Val-137 and Lys-152. Residue Asp-287 is the Proton acceptor of the active site. Residues Leu-515 to Phe-537 traverse the membrane as a helical segment.

It belongs to the ABC1 family. UbiB subfamily.

Its subcellular location is the cell inner membrane. It participates in cofactor biosynthesis; ubiquinone biosynthesis [regulation]. In terms of biological role, is probably a protein kinase regulator of UbiI activity which is involved in aerobic coenzyme Q (ubiquinone) biosynthesis. The protein is Probable protein kinase UbiB of Aliivibrio fischeri (strain ATCC 700601 / ES114) (Vibrio fischeri).